Reading from the N-terminus, the 2642-residue chain is Fusarielin synthase FSL1 (2642 aa).

One can recognise a Ketosynthase family 3 (KS3) domain in the interval 6-450 (NEPIAIIGTG…GTNAHAILEA (445 aa)). Catalysis depends on for beta-ketoacyl synthase activity residues Cys-179, His-318, and His-370. Residues 566 to 890 (VFTGQGAQWA…PYTSALVRGK (325 aa)) are malonyl-CoA:ACP transacylase (MAT) domain. Ser-659 acts as the For malonyltransferase activity in catalysis. Positions 965 to 1101 (HDLLGIQTAD…GKVCIFLQTE (137 aa)) are N-terminal hotdog fold. The tract at residues 965 to 1279 (HDLLGIQTAD…SFSPFAAATD (315 aa)) is dehydratase (DH) domain. The PKS/mFAS DH domain occupies 965 to 1280 (HDLLGIQTAD…FSPFAAATDR (316 aa)). The active-site Proton acceptor; for dehydratase activity is the His-997. Positions 1126 to 1280 (MAGIDVERFY…FSPFAAATDR (155 aa)) are C-terminal hotdog fold. The active-site Proton donor; for dehydratase activity is Asp-1189. Residues 1423–1622 (NYLDRYYTHA…GVDTNTPMPD (200 aa)) are methyltransferase (MET) domain. A ketoreductase (KR) domain region spans residues 2244–2423 (TYWMLGLTGD…GHNAAVIDIS (180 aa)). The Carrier domain occupies 2556–2635 (QEVTSVLTSC…DLADYILESL (80 aa)). The residue at position 2595 (Ser-2595) is an O-(pantetheine 4'-phosphoryl)serine.

It depends on pantetheine 4'-phosphate as a cofactor.

It functions in the pathway secondary metabolite biosynthesis. Reducing polyketide synthase; part of the gene cluster that mediates the biosynthesis of fusarielins F, G and H, decaketide compounds with 5 methylations and a decaline core that act as mycoestrogens as they stimulate growth of MCF-7 breast cancer cells. The initial compound in the pathway is produced by the reducing polyketide synthase FSL1. FSL1 lacks an active enoyl reductase (ER) domain and biosynthesis of fusarielins relies on the trans-acting enoyl reductase FSL5, before it is released through hydrolysis catalyzed by the thioesterase FSL2. Fusarielins F, G, and H have a C11=C12 cis double bond and is fully reduced between C10 and C11 and between C12 and C13. FSL3 can be involved in the formation of the C11=C12 cis double bond by moving a hypothetical C10=C11 or C12=C13 trans double bond to form prefusarielin. Prefusarielin is oxygenated at C15 and C16 by the cytochrome P450 monooxygenase FSL4, resulting in fusarielin F, which subsequently is epoxidized into fusarielin G by the same enzyme. The final step in the pathway is a reduction of the carboxylic acid moiety to yield fusarielin H via a still undetermined mechanism. This Gibberella zeae (strain ATCC MYA-4620 / CBS 123657 / FGSC 9075 / NRRL 31084 / PH-1) (Wheat head blight fungus) protein is Fusarielin synthase FSL1.